A 115-amino-acid polypeptide reads, in one-letter code: Ribonuclease P protein component (115 aa).

The protein belongs to the RnpA family. As to quaternary structure, consists of a catalytic RNA component (M1 or rnpB) and a protein subunit.

The catalysed reaction is Endonucleolytic cleavage of RNA, removing 5'-extranucleotides from tRNA precursor.. Functionally, RNaseP catalyzes the removal of the 5'-leader sequence from pre-tRNA to produce the mature 5'-terminus. It can also cleave other RNA substrates such as 4.5S RNA. The protein component plays an auxiliary but essential role in vivo by binding to the 5'-leader sequence and broadening the substrate specificity of the ribozyme. The sequence is that of Ribonuclease P protein component from Bacillus cereus (strain 03BB102).